We begin with the raw amino-acid sequence, 298 residues long: 4-diphosphocytidyl-2-C-methyl-D-erythritol kinase (298 aa).

K19 is an active-site residue. 106 to 116 is a binding site for ATP; it reads PVASGIGGGSA. The active site involves D148.

This sequence belongs to the GHMP kinase family. IspE subfamily.

The catalysed reaction is 4-CDP-2-C-methyl-D-erythritol + ATP = 4-CDP-2-C-methyl-D-erythritol 2-phosphate + ADP + H(+). It participates in isoprenoid biosynthesis; isopentenyl diphosphate biosynthesis via DXP pathway; isopentenyl diphosphate from 1-deoxy-D-xylulose 5-phosphate: step 3/6. Functionally, catalyzes the phosphorylation of the position 2 hydroxy group of 4-diphosphocytidyl-2C-methyl-D-erythritol. In Rhizobium leguminosarum bv. trifolii (strain WSM2304), this protein is 4-diphosphocytidyl-2-C-methyl-D-erythritol kinase.